The following is a 98-amino-acid chain: Capsid assembly scaffolding protein (98 aa).

The stretch at Val40–Val62 forms a coiled coil.

It belongs to the phi29likevirus scaffolding protein family. Homodimer. Interacts non-specifically with DNA; probably binds DNA in the early stages of DNA packaging.

In terms of biological role, scaffolding protein involved in the icosahedric procapsid assembly. Coassembles with the capsid proteins to form the procapsid. The scaffolding protein is found within the capsid as a serie of concentric shells. During DNA packaging, the scaffolding protein molecules are released from the procapsid. This is Capsid assembly scaffolding protein (7) from Bacillus subtilis (Bacteriophage phi-29).